Consider the following 1042-residue polypeptide: Kinesin-like protein KIN-5A (1042 aa).

The segment covering 1 to 14 has biased composition (low complexity); that stretch reads MDSNNSKKGSSVKS. The tract at residues 1–45 is disordered; sequence MDSNNSKKGSSVKSPCQTPRSTEKSNRDFRVDSNSNSNPVSKNEK. Positions 21–31 are enriched in basic and acidic residues; that stretch reads STEKSNRDFRV. Over residues 32–41 the composition is skewed to polar residues; the sequence is DSNSNSNPVS. The Kinesin motor domain occupies 50–392; sequence NIQVIVRCRP…LDYAHRAKHI (343 aa). 136–143 lines the ATP pocket; it reads GQTGTGKT. Residues 480 to 517 adopt a coiled-coil conformation; sequence TAGLREKLDKTEKKLYETEQALLDLEEKHRQAVATIKE. Residues 1021 to 1042 form a disordered region; the sequence is KQMQNGEAKHVSNGRPPLTAIN.

It belongs to the TRAFAC class myosin-kinesin ATPase superfamily. Kinesin family. KIN-5/BimC subfamily.

The protein localises to the cytoplasm. Its subcellular location is the cytoskeleton. The protein resides in the spindle. Functionally, responsible for microtubule translocation. May be important for the organization of phragmoplast-specific arrays of microtubules. Plays an essential role in stabilizing the mitotic spindle. Required during mitotic cytokinesis. The chain is Kinesin-like protein KIN-5A from Arabidopsis thaliana (Mouse-ear cress).